Reading from the N-terminus, the 938-residue chain is Kinesin-like protein KIN-7B (938 aa).

Residues 29-348 (KILVTVRMRP…LSFAMSAKEV (320 aa)) enclose the Kinesin motor domain. Residue 113-120 (GQTSSGKT) participates in ATP binding. Positions 357 to 431 (VVSEKKLLKH…DLERKAKERK (75 aa)) form a coiled coil. The interval 450–481 (TKEESIPSKSVPSSRRTARDRRKDNVRQSLTS) is disordered. Positions 555–590 (KANLKEEINRLNSQEIAALEKKLECVQNTIDMLVSS) form a coiled coil. The interval 628–678 (CSPLSGTENKDPESNVVSANSAPVSFGATPPKRDDNRCRTQSREGTPVSRQ) is disordered. Residues 641-652 (SNVVSANSAPVS) are compositionally biased toward low complexity. A compositionally biased stretch (basic and acidic residues) spans 658 to 669 (PKRDDNRCRTQS).

This sequence belongs to the TRAFAC class myosin-kinesin ATPase superfamily. Kinesin family. KIN-7 subfamily. In terms of assembly, interacts with ANP3. Interacts with TIO/FU. In terms of tissue distribution, expressed in roots, stems, flowers, pollen mother cells and embryos.

The protein localises to the cytoplasm. Its subcellular location is the cytoskeleton. The protein resides in the phragmoplast. Its function is as follows. Probable plus end-directed motor protein that functions in the NACK-PQR (ANP3-MKK6-MPK4) MAP kinase signaling pathway, which is essential for somatic cell cytokinesis, especially for the cell-plate formation and its expansion. May regulate the activity and the localization of ANP3, probably by association through the non-catalytic region of the kinase. Functionally redundant with NACK1 and essential to promote the progression of cytokinesis and for cellularization (formation of the cell plate) during microgametogenesis and megagametogenesis. The polypeptide is Kinesin-like protein KIN-7B (Arabidopsis thaliana (Mouse-ear cress)).